A 555-amino-acid chain; its full sequence is Small ribosomal subunit protein uS3m (555 aa).

Residues 1 to 20 form a disordered region; it reads MARKGNPISVRLGKNRSSDS.

Belongs to the universal ribosomal protein uS3 family.

Its subcellular location is the mitochondrion. The protein is Small ribosomal subunit protein uS3m (RPS3) of Brassica napus (Rape).